The sequence spans 76 residues: Probable small nuclear ribonucleoprotein G (76 aa).

The region spanning 4–76 (AHPPEVKKYM…IVMVEALDRV (73 aa)) is the Sm domain.

Belongs to the snRNP Sm proteins family. In terms of assembly, interacts with the SMN complex. Core component of the spliceosomal U1, U2, U4 and U5 small nuclear ribonucleoproteins (snRNPs), the building blocks of the spliceosome. Most spliceosomal snRNPs contain a common set of Sm proteins, SNRPB, SNRPD1, SNRPD2, SNRPD3, SNRPE, SNRPF and SNRPG that assemble in a heptameric protein ring on the Sm site of the small nuclear RNA to form the core snRNP. Component of the U1 snRNP. Component of the U4/U6-U5 tri-snRNP complex. Component of the U7 snRNP complex. Component of the U11/U12 snRNPs that are part of the U12-type spliceosome.

The protein resides in the cytoplasm. Its subcellular location is the cytosol. The protein localises to the nucleus. Its function is as follows. Plays a role in pre-mRNA splicing as a core component of the spliceosomal U1, U2, U4 and U5 small nuclear ribonucleoproteins (snRNPs), the building blocks of the spliceosome. Component of both the pre-catalytic spliceosome B complex and activated spliceosome C complexes. Is also a component of the minor U12 spliceosome. This Drosophila melanogaster (Fruit fly) protein is Probable small nuclear ribonucleoprotein G.